The primary structure comprises 208 residues: Small ribosomal subunit protein uS4 (208 aa).

Positions 98-161 (RRLDNVIYRL…RKIPVIAEAQ (64 aa)) constitute an S4 RNA-binding domain.

The protein belongs to the universal ribosomal protein uS4 family. In terms of assembly, part of the 30S ribosomal subunit. Contacts protein S5. The interaction surface between S4 and S5 is involved in control of translational fidelity.

Its function is as follows. One of the primary rRNA binding proteins, it binds directly to 16S rRNA where it nucleates assembly of the body of the 30S subunit. Functionally, with S5 and S12 plays an important role in translational accuracy. The protein is Small ribosomal subunit protein uS4 of Nitratidesulfovibrio vulgaris (strain DSM 19637 / Miyazaki F) (Desulfovibrio vulgaris).